The sequence spans 429 residues: Glutamate-1-semialdehyde 2,1-aminomutase 2 (429 aa).

Lys-268 carries the post-translational modification N6-(pyridoxal phosphate)lysine.

It belongs to the class-III pyridoxal-phosphate-dependent aminotransferase family. HemL subfamily. In terms of assembly, homodimer. It depends on pyridoxal 5'-phosphate as a cofactor.

It is found in the cytoplasm. The enzyme catalyses (S)-4-amino-5-oxopentanoate = 5-aminolevulinate. The protein operates within porphyrin-containing compound metabolism; protoporphyrin-IX biosynthesis; 5-aminolevulinate from L-glutamyl-tRNA(Glu): step 2/2. The sequence is that of Glutamate-1-semialdehyde 2,1-aminomutase 2 from Geobacillus kaustophilus (strain HTA426).